The following is a 313-amino-acid chain: Protein sprouty homolog 1 (313 aa).

Met1 carries the N-acetylmethionine modification. The tract at residues 43 to 152 (QIKAIRGSNE…RSDRVIRTQP (110 aa)) is disordered. Over residues 69 to 79 (PRPEKQERTHE) the composition is skewed to basic and acidic residues. The span at 106–125 (SRSTSTGSAASSGSSSSVSS) shows a compositional bias: low complexity. The SPR domain occupies 177 to 289 (QCGKCKCGEC…CYDWTHRPGC (113 aa)).

This sequence belongs to the sprouty family. Forms heterodimers with SPRY2. Interacts with TESK1. Interacts with CAV1 (via C-terminus).

The protein resides in the cytoplasm. It localises to the membrane. In terms of biological role, inhibits fibroblast growth factor (FGF)-induced retinal lens fiber differentiation, probably by inhibiting FGF-mediated phosphorylation of ERK1/2. Inhibits TGFB-induced epithelial-to-mesenchymal transition in lens epithelial cells. The protein is Protein sprouty homolog 1 (Spry1) of Mus musculus (Mouse).